A 242-amino-acid polypeptide reads, in one-letter code: Anamorsin homolog (242 aa).

Residues 1–140 (MMNFADTLVI…NVTAENPDFL (140 aa)) are N-terminal SAM-like domain. Residues 141–162 (SNEDDDEGNSSDGEAYQNAEDN) form a linker region. C205, C208, C216, and C219 together coordinate [4Fe-4S] cluster. Short sequence motifs (cx2C motif) lie at residues 205–208 (CGNC) and 216–219 (CASC). The tract at residues 205 to 219 (CGNCYLGDAFRCASC) is fe-S binding site B.

Belongs to the anamorsin family. In terms of assembly, monomer. It depends on [4Fe-4S] cluster as a cofactor.

It localises to the cytoplasm. The protein localises to the mitochondrion intermembrane space. In terms of biological role, component of the cytosolic iron-sulfur (Fe-S) protein assembly (CIA) machinery. Required for the maturation of extramitochondrial Fe-S proteins. Part of an electron transfer chain functioning in an early step of cytosolic Fe-S biogenesis, facilitating the de novo assembly of a [4Fe-4S] cluster on the cytosolic Fe-S scaffold complex. Electrons are transferred from NADPH via a FAD- and FMN-containing diflavin oxidoreductase. Together with the diflavin oxidoreductase, also required for the assembly of the diferric tyrosyl radical cofactor of ribonucleotide reductase (RNR), probably by providing electrons for reduction during radical cofactor maturation in the catalytic small subunit. In Plasmodium knowlesi (strain H), this protein is Anamorsin homolog.